The sequence spans 395 residues: Probable inactive serine/threonine-protein kinase DDB_G0293746 (395 aa).

A Protein kinase domain is found at 9–395 (YSEIDLISDN…ITQFIIDYLF (387 aa)). Residues 15 to 23 (ISDNPFKNY) and Lys54 contribute to the ATP site. The segment at 213–266 (NSSLSSLSSSTSSSSSSSSSTNCNNNTTENNNNNYNNNNNNNNNNNNNNNNNSL) is disordered.

It belongs to the protein kinase superfamily. Ser/Thr protein kinase family.

The chain is Probable inactive serine/threonine-protein kinase DDB_G0293746 from Dictyostelium discoideum (Social amoeba).